The following is a 72-amino-acid chain: Large ribosomal subunit protein bL31 (72 aa).

4 residues coordinate Zn(2+): Cys-16, Cys-18, Cys-38, and Cys-41.

It belongs to the bacterial ribosomal protein bL31 family. Type A subfamily. In terms of assembly, part of the 50S ribosomal subunit. Zn(2+) serves as cofactor.

Functionally, binds the 23S rRNA. The chain is Large ribosomal subunit protein bL31 from Beutenbergia cavernae (strain ATCC BAA-8 / DSM 12333 / CCUG 43141 / JCM 11478 / NBRC 16432 / NCIMB 13614 / HKI 0122).